The sequence spans 767 residues: Cilium assembly protein DZIP1L (767 aa).

Residues 122-144 (QQRGQQELGRQADELKGVREESR) are disordered. The segment covering 131-144 (RQADELKGVREESR) has biased composition (basic and acidic residues). The segment at 166–189 (HTCHLCDKTFMNATFLRGHIQRRH) adopts a C2H2-type zinc-finger fold. Positions 205-406 (VEEVLEELRA…SQEEMIQSLS (202 aa)) form a coiled coil. Position 426 is a phosphoserine (Ser426). The interval 518–767 (SRAKERQENG…SSGQPRVPAW (250 aa)) is disordered. Polar residues-rich tracts occupy residues 533-547 (PDGQPSVKSQQSTLV) and 574-588 (RQSHGSHGSSLTQVS). Residues 607–616 (GPGMSTPPFS) show a composition bias toward low complexity. The segment covering 658-675 (ENAQPPGQGSGTLVQSMV) has biased composition (polar residues). Positions 677–686 (NLEKQLEAPA) are enriched in basic and acidic residues.

This sequence belongs to the DZIP C2H2-type zinc-finger protein family. In terms of assembly, interacts with SEPTIN2.

Its subcellular location is the cytoplasm. It is found in the cytoskeleton. The protein localises to the cilium basal body. It localises to the microtubule organizing center. The protein resides in the centrosome. Its subcellular location is the centriole. Functionally, involved in primary cilium formation. Probably acts as a transition zone protein required for localization of PKD1/PC1 and PKD2/PC2 to the ciliary membrane. The protein is Cilium assembly protein DZIP1L of Homo sapiens (Human).